The primary structure comprises 87 residues: MNSKVFAVLLLLALSTCVLSEKYCPTPRNTSCKKMNIRNNCCRDSDCTSNAFCCAEPCGNFCHKASDKPGGRRVDPNASCQTGYVYW.

The signal sequence occupies residues 1-20 (MNSKVFAVLLLLALSTCVLS). One can recognise a WAP domain in the interval 21-66 (EKYCPTPRNTSCKKMNIRNNCCRDSDCTSNAFCCAEPCGNFCHKAS). 5 disulfide bridges follow: cysteine 24–cysteine 54, cysteine 32–cysteine 58, cysteine 41–cysteine 53, cysteine 42–cysteine 80, and cysteine 47–cysteine 62.

Belongs to the venom protein 11 family. 01 (wap-1) subfamily. In terms of processing, contains 5 disulfide bonds. Expressed by the venom gland.

It is found in the secreted. In terms of biological role, has antibacterial activity. This chain is U14-lycotoxin-Ls1a, found in Lycosa singoriensis (Wolf spider).